An 800-amino-acid polypeptide reads, in one-letter code: N,N'-diacetylchitobiose phosphorylase (800 aa).

N-acetyl-alpha-D-glucosamine 1-phosphate-binding residues include Arg333, Arg343, Arg349, Asp350, Trp490, and Asp492. The active-site Proton donor is the Asp492. Residues Asp492, Lys636, and Glu637 each coordinate N-acetyl-D-glucosamine. Positions 637, 644, 690, 709, and 710 each coordinate N-acetyl-alpha-D-glucosamine 1-phosphate.

Belongs to the glycosyl hydrolase 94 family. Homodimer.

The catalysed reaction is N,N'-diacetylchitobiose + phosphate = N-acetyl-alpha-D-glucosamine 1-phosphate + N-acetyl-D-glucosamine. Its function is as follows. Catalyzes the reversible phosphorolysis of chitobiose (N,N'-diacetylchitobiose or (GlcNAc)(2)) into N-acetyl-alpha-D-glucosamine 1-phosphate (GlcNAc-1-P) and N-acetyl-D-glucosamine (GlcNAc) with inversion of the anomeric configuration. The polypeptide is N,N'-diacetylchitobiose phosphorylase (Vibrio furnissii).